Here is an 868-residue protein sequence, read N- to C-terminus: Programmed cell death 6-interacting protein (868 aa).

A2 bears the N-acetylalanine mark. Residues 3–392 (TFISVQLKKT…AQMREATTLA (390 aa)) form the BRO1 domain. The interaction with CHMP4A, CHMP4B and CHMP4C stretch occupies residues 176-503 (TVDISPDTVG…NFRTVLDKAV (328 aa)). Residues 176–868 (TVDISPDTVG…PPQQSYYPQQ (693 aa)) form an interaction with EIAV p9 region. Residue K215 is modified to N6-acetyllysine. The tract at residues 418–868 (LTKSRSVIEQ…PPQQSYYPQQ (451 aa)) is interaction with SDCBP. T479 carries the phosphothreonine modification. S481 bears the Phosphoserine mark. The interval 503–868 (VQADGQVKEC…PPQQSYYPQQ (366 aa)) is self-association. Disordered regions lie at residues 713–809 (IARE…YPGY) and 832–868 (PYPP…YPQQ). The segment at 717–720 (PSAP) is interaction with TSG101. The residue at position 730 (S730) is a Phosphoserine. Residues 737–763 (PTPPTPAPRTMPPTKPQPPARPPPPVL) show a composition bias toward pro residues. Phosphothreonine occurs at positions 738 and 741. At R745 the chain carries Omega-N-methylarginine. Residues 778 to 791 (GAGTAAPAPSQTPG) show a composition bias toward low complexity. Pro residues-rich tracts occupy residues 792 to 807 (SAPP…PTYP) and 844 to 860 (APYP…PQPP). The tract at residues 801 to 806 (PPYPTY) is interaction with CEP55. The segment at 864 to 868 (YYPQQ) is essential to promote virus budding.

Self-associates. Interacts with SH3KBP1/CIN85. Interacts with PDCD6 in a calcium -dependent manner. Interacts with TSG101 in a calcium-dependent manner; PDCD6IP homooligomerization may be required for TSG101-binding. Interacts with SGSM3. Directly interacts with CHMP4A, CHMP4B and CHMP4C. Directly interacts with CEP55 in a 1:2 stoechiometry. The interaction with CEP55 is required for PDCD6IP targeting to the midbody. May interact with PDGFRB. Interacts with SH3GL1 and SH3GL2/endophilin-1. Forms a complex with SDCBP and SDC2. Found in a complex with F-actin, TJP1/ZO-1 and PARD3. Interacts with CD2AP. Interacts with ARRDC1. Interacts (via BRO1 domain) with the ATG12-ATG3 conjugate; this interaction is bridged by ATG12 and promotes multiple PDCD6IP-mediated functions such as endolysosomal trafficking, macroautophagy and exosome biogenesis. In terms of assembly, (Microbial infection) Interacts with HIV-1 p6. Interacts with HIV-1 p9. As to quaternary structure, (Microbial infection) Interacts with EIAV p9. (Microbial infection) Interacts with Murine leukemia virus Gag polyprotein (via LYPX(n)L motif). In terms of assembly, (Microbial infection) Interacts with ebola virus protein VP40 (via YPx(n)L/I motif). In terms of processing, may be phosphorylated on tyrosine residues by activated PDGFRB.

It localises to the cytoplasm. It is found in the cytosol. The protein localises to the melanosome. The protein resides in the cytoskeleton. Its subcellular location is the microtubule organizing center. It localises to the centrosome. It is found in the secreted. The protein localises to the extracellular exosome. The protein resides in the cell junction. Its subcellular location is the tight junction. It localises to the midbody. It is found in the midbody ring. In terms of biological role, multifunctional protein involved in endocytosis, multivesicular body biogenesis, membrane repair, cytokinesis, apoptosis and maintenance of tight junction integrity. Class E VPS protein involved in concentration and sorting of cargo proteins of the multivesicular body (MVB) for incorporation into intralumenal vesicles (ILVs) that are generated by invagination and scission from the limiting membrane of the endosome. Binds to the phospholipid lysobisphosphatidic acid (LBPA) which is abundant in MVBs internal membranes. The MVB pathway requires the sequential function of ESCRT-O, -I,-II and -III complexes. The ESCRT machinery also functions in topologically equivalent membrane fission events, such as the terminal stages of cytokinesis. Adapter for a subset of ESCRT-III proteins, such as CHMP4, to function at distinct membranes. Required for completion of cytokinesis. May play a role in the regulation of both apoptosis and cell proliferation. Regulates exosome biogenesis in concert with SDC1/4 and SDCBP. By interacting with F-actin, PARD3 and TJP1 secures the proper assembly and positioning of actomyosin-tight junction complex at the apical sides of adjacent epithelial cells that defines a spatial membrane domain essential for the maintenance of epithelial cell polarity and barrier. (Microbial infection) Involved in HIV-1 virus budding. Can replace TSG101 it its role of supporting HIV-1 release; this function requires the interaction with CHMP4B. The ESCRT machinery also functions in topologically equivalent membrane fission events, such as enveloped virus budding (HIV-1 and other lentiviruses). The protein is Programmed cell death 6-interacting protein of Homo sapiens (Human).